The primary structure comprises 411 residues: Lissencephaly-1 homolog (411 aa).

One can recognise a LisH domain in the interval 9-41 (QREELNQAIADYLGTNGYADSLEAFRKEADLST). A coiled-coil region spans residues 56–83 (TSVIRLQKKVMELEAKLTEAEKEVIEGA). 7 WD repeats span residues 106–147 (GHRA…RTLK), 148–187 (GHTDSVQDVAFDAQGKLLVSCSADLSIKLWDFQQSYECVK), 191–230 (GHDHNVSSVAFVPAGDYVLSASRDRTIKMWEVATGYCVKT), 233–272 (GHREWVRMVRVHIEGSIFATCSNDHTIRVWLTNSKDCKVE), 275–334 (DHEH…CLLT), 337–376 (GHDNWVRGLAFHPGGKYLVSASDDKTIRVWDLRNKRCMKT), and 379–411 (AHQHFCTSIDFHKAHPYVISGSVDQTVKVWECR).

The protein belongs to the WD repeat LIS1/nudF family.

It is found in the cytoplasm. Its subcellular location is the cytoskeleton. It localises to the microtubule organizing center. The protein resides in the centrosome. In terms of biological role, positively regulates the activity of the minus-end directed microtubule motor protein dynein. May enhance dynein-mediated microtubule sliding by targeting dynein to the microtubule plus end. Required for several dynein- and microtubule-dependent processes. The sequence is that of Lissencephaly-1 homolog from Drosophila grimshawi (Hawaiian fruit fly).